A 452-amino-acid polypeptide reads, in one-letter code: UDP-glycosyltransferase 76D1 (452 aa).

Residues Ser-269, 329-331 (APQ), 346-354 (HGGWNSCLE), and 368-371 (SGDQ) contribute to the UDP-alpha-D-glucose site.

Belongs to the UDP-glycosyltransferase family.

Functionally, possesses low quercetin 7-O-glucosyltransferase activity in vitro. This is UDP-glycosyltransferase 76D1 (UGT76D1) from Arabidopsis thaliana (Mouse-ear cress).